Here is a 442-residue protein sequence, read N- to C-terminus: GTPase Obg (442 aa).

Residues 1 to 158 form the Obg domain; sequence MFYDQARIFV…HWLELELKLL (158 aa). Residues 159–329 form the OBG-type G domain; that stretch reads ADVGLVGFPN…LIYHVHKGLE (171 aa). GTP-binding positions include 165 to 172, 190 to 194, 212 to 215, 282 to 285, and 310 to 312; these read GFPNVGKS, FTTLE, DIPG, NKMD, and SAA. Mg(2+)-binding residues include S172 and T192. The 79-residue stretch at 349-427 folds into the OCT domain; sequence FTGKTEERFK…IGDLDFDFIE (79 aa).

Belongs to the TRAFAC class OBG-HflX-like GTPase superfamily. OBG GTPase family. In terms of assembly, monomer. Mg(2+) is required as a cofactor.

It is found in the cytoplasm. Functionally, an essential GTPase which binds GTP, GDP and possibly (p)ppGpp with moderate affinity, with high nucleotide exchange rates and a fairly low GTP hydrolysis rate. Plays a role in control of the cell cycle, stress response, ribosome biogenesis and in those bacteria that undergo differentiation, in morphogenesis control. The polypeptide is GTPase Obg (Heliobacterium modesticaldum (strain ATCC 51547 / Ice1)).